The sequence spans 218 residues: dTTP/UTP pyrophosphatase (218 aa).

Residue Asp69 is the Proton acceptor of the active site.

Belongs to the Maf family. YhdE subfamily. A divalent metal cation serves as cofactor.

It is found in the cytoplasm. It carries out the reaction dTTP + H2O = dTMP + diphosphate + H(+). The catalysed reaction is UTP + H2O = UMP + diphosphate + H(+). In terms of biological role, nucleoside triphosphate pyrophosphatase that hydrolyzes dTTP and UTP. May have a dual role in cell division arrest and in preventing the incorporation of modified nucleotides into cellular nucleic acids. This chain is dTTP/UTP pyrophosphatase, found in Thermomicrobium roseum (strain ATCC 27502 / DSM 5159 / P-2).